A 212-amino-acid chain; its full sequence is uncharacterized protein (212 aa).

S-adenosyl-L-methionine contacts are provided by G53, E74, and D97.

The protein belongs to the methyltransferase superfamily. YrrT family.

In terms of biological role, could be a S-adenosyl-L-methionine-dependent methyltransferase. This is an uncharacterized protein from Bacillus thuringiensis (strain Al Hakam).